The chain runs to 214 residues: Charged multivesicular body protein 2b (214 aa).

Positions 16-55 (EQNKELRGTQRAITRDRAALEKQEKQLEMEIKKMAKAGNK) form a coiled coil. Positions 178 to 203 (MAKAPSAAKGLPSTSASKSSGISDEE) are disordered. A compositionally biased stretch (polar residues) spans 189-199 (PSTSASKSSGI). An MIT-interacting motif motif is present at residues 202-212 (EEIERQLKALG).

This sequence belongs to the SNF7 family. In terms of assembly, probable core component of the endosomal sorting required for transport complex III (ESCRT-III). ESCRT-III components are thought to multimerize to form a flat lattice on the perimeter membrane of the endosome.

The protein resides in the cytoplasm. It localises to the cytosol. Its subcellular location is the late endosome membrane. Functionally, probable core component of the endosomal sorting required for transport complex III (ESCRT-III) which is involved in multivesicular bodies (MVBs) formation and sorting of endosomal cargo proteins into MVBs. MVBs contain intraluminal vesicles (ILVs) that are generated by invagination and scission from the limiting membrane of the endosome and mostly are delivered to lysosomes enabling degradation of membrane proteins, such as stimulated growth factor receptors, lysosomal enzymes and lipids. This chain is Charged multivesicular body protein 2b (chmp2b), found in Xenopus tropicalis (Western clawed frog).